Here is a 285-residue protein sequence, read N- to C-terminus: Glutamate racemase (285 aa).

Substrate is bound by residues 30 to 31 (DS) and 62 to 63 (YG). The active-site Proton donor/acceptor is Cys-94. Substrate is bound at residue 95-96 (NT). Cys-206 functions as the Proton donor/acceptor in the catalytic mechanism. A substrate-binding site is contributed by 207–208 (TH).

It belongs to the aspartate/glutamate racemases family.

It carries out the reaction L-glutamate = D-glutamate. It functions in the pathway cell wall biogenesis; peptidoglycan biosynthesis. Functionally, provides the (R)-glutamate required for cell wall biosynthesis. This Pectobacterium atrosepticum (strain SCRI 1043 / ATCC BAA-672) (Erwinia carotovora subsp. atroseptica) protein is Glutamate racemase.